Consider the following 642-residue polypeptide: Threonine--tRNA ligase (642 aa).

Residues 1–61 (MPIITLPDGS…TADSELAIIT (61 aa)) form the TGS domain. The segment at 243-534 (DHRKIGKQLD…LIEEYAGKFP (292 aa)) is catalytic. Residues cysteine 334, histidine 385, and histidine 511 each coordinate Zn(2+).

The protein belongs to the class-II aminoacyl-tRNA synthetase family. As to quaternary structure, homodimer. Zn(2+) serves as cofactor.

The protein localises to the cytoplasm. The enzyme catalyses tRNA(Thr) + L-threonine + ATP = L-threonyl-tRNA(Thr) + AMP + diphosphate + H(+). Catalyzes the attachment of threonine to tRNA(Thr) in a two-step reaction: L-threonine is first activated by ATP to form Thr-AMP and then transferred to the acceptor end of tRNA(Thr). Also edits incorrectly charged L-seryl-tRNA(Thr). The chain is Threonine--tRNA ligase from Shewanella frigidimarina (strain NCIMB 400).